A 254-amino-acid polypeptide reads, in one-letter code: Phosphate import ATP-binding protein PstB (254 aa).

In terms of domain architecture, ABC transporter spans 7–249; the sequence is MVAESMSFYY…PREKQTEDYI (243 aa). 39-46 lines the ATP pocket; it reads GPSGCGKS.

It belongs to the ABC transporter superfamily. Phosphate importer (TC 3.A.1.7) family. As to quaternary structure, the complex is composed of two ATP-binding proteins (PstB), two transmembrane proteins (PstC and PstA) and a solute-binding protein (PstS).

The protein localises to the cell inner membrane. The enzyme catalyses phosphate(out) + ATP + H2O = ADP + 2 phosphate(in) + H(+). Part of the ABC transporter complex PstSACB involved in phosphate import. Responsible for energy coupling to the transport system. The sequence is that of Phosphate import ATP-binding protein PstB from Chlorobium chlorochromatii (strain CaD3).